The following is a 464-amino-acid chain: Chromosomal replication initiator protein DnaA (464 aa).

Positions 1 to 82 (MSLSLWQQCL…LLRFEVGSKP (82 aa)) are domain I, interacts with DnaA modulators. The segment at 82–127 (PITQVISQTVTASVSSAPAAPAARTAAPSRPSWDNAAAQPELSYRS) is domain II. Residues 98-113 (APAAPAARTAAPSRPS) are compositionally biased toward low complexity. The disordered stretch occupies residues 98–117 (APAAPAARTAAPSRPSWDNA). Residues 128–344 (NVNPKHTFDN…GALNRVIANA (217 aa)) are domain III, AAA+ region. Positions 172, 174, 175, and 176 each coordinate ATP. The tract at residues 345-464 (NFTGRAITID…FSNLIRTLSS (120 aa)) is domain IV, binds dsDNA.

The protein belongs to the DnaA family. In terms of assembly, oligomerizes as a right-handed, spiral filament on DNA at oriC.

It localises to the cytoplasm. Its function is as follows. Plays an important role in the initiation and regulation of chromosomal replication. Binds to the origin of replication; it binds specifically double-stranded DNA at a 9 bp consensus (dnaA box): 5'-TTATC[CA]A[CA]A-3'. DnaA binds to ATP and to acidic phospholipids. DnaA can inhibit its own gene expression as well as that of other genes. Functionally, plays an essential role in the initiation and regulation of chromosomal replication. ATP-DnaA binds to the origin of replication (oriC) to initiate formation of the DNA replication initiation complex once per cell cycle. Binds the DnaA box (a 9 base pair repeat at the origin) and separates the double-stranded (ds)DNA. Forms a right-handed helical filament on oriC DNA; dsDNA binds to the exterior of the filament while single-stranded (ss)DNA is stabiized in the filament's interior. The ATP-DnaA-oriC complex binds and stabilizes one strand of the AT-rich DNA unwinding element (DUE), permitting loading of DNA polymerase. After initiation quickly degrades to an ADP-DnaA complex that is not apt for DNA replication. Binds acidic phospholipids. The polypeptide is Chromosomal replication initiator protein DnaA (Serratia marcescens).